Consider the following 94-residue polypeptide: Integration host factor subunit beta (94 aa).

The protein belongs to the bacterial histone-like protein family. In terms of assembly, heterodimer of an alpha and a beta chain.

Its function is as follows. This protein is one of the two subunits of integration host factor, a specific DNA-binding protein that functions in genetic recombination as well as in transcriptional and translational control. The protein is Integration host factor subunit beta of Actinobacillus succinogenes (strain ATCC 55618 / DSM 22257 / CCUG 43843 / 130Z).